A 505-amino-acid polypeptide reads, in one-letter code: uncharacterized protein (505 aa).

A disordered region spans residues 1 to 52 (MVDGSIHVPVQSHEGQHDNSSSLNEEIQTSQDPLGIVESYQESSTSDFDKSH). Over residues 18–32 (DNSSSLNEEIQTSQD) the composition is skewed to polar residues. 10 helical membrane-spanning segments follow: residues 141–161 (FWIV…TNTF), 173–193 (AFQT…YTVF), 208–228 (GWKY…VVLA), 235–255 (LSAS…SFIF), 265–285 (ILGV…DVIS), 290–310 (SAVN…CYGV), 326–346 (VVIG…TFIF), 362–382 (GYLA…PILF), 389–409 (FYNI…IHVF), and 415–435 (WLYP…HVFV). Phosphoserine is present on residues serine 463, serine 466, and serine 467.

It belongs to the SLC35F solute transporter family.

Its subcellular location is the golgi apparatus membrane. This is an uncharacterized protein from Schizosaccharomyces pombe (strain 972 / ATCC 24843) (Fission yeast).